The chain runs to 439 residues: Methylenetetrahydrofolate--tRNA-(uracil-5-)-methyltransferase TrmFO (439 aa).

Position 8-13 (8-13) interacts with FAD; that stretch reads GAGLAG.

It belongs to the MnmG family. TrmFO subfamily. Requires FAD as cofactor.

Its subcellular location is the cytoplasm. It catalyses the reaction uridine(54) in tRNA + (6R)-5,10-methylene-5,6,7,8-tetrahydrofolate + NADH + H(+) = 5-methyluridine(54) in tRNA + (6S)-5,6,7,8-tetrahydrofolate + NAD(+). The catalysed reaction is uridine(54) in tRNA + (6R)-5,10-methylene-5,6,7,8-tetrahydrofolate + NADPH + H(+) = 5-methyluridine(54) in tRNA + (6S)-5,6,7,8-tetrahydrofolate + NADP(+). Its function is as follows. Catalyzes the folate-dependent formation of 5-methyl-uridine at position 54 (M-5-U54) in all tRNAs. This is Methylenetetrahydrofolate--tRNA-(uracil-5-)-methyltransferase TrmFO from Magnetococcus marinus (strain ATCC BAA-1437 / JCM 17883 / MC-1).